Here is an 813-residue protein sequence, read N- to C-terminus: LPS-assembly protein LptD (813 aa).

A signal peptide spans 1 to 22; the sequence is MRRALRLLPLPLSIAICLPAMA.

It belongs to the LptD family. As to quaternary structure, component of the lipopolysaccharide transport and assembly complex. Interacts with LptE and LptA.

Its subcellular location is the cell outer membrane. In terms of biological role, together with LptE, is involved in the assembly of lipopolysaccharide (LPS) at the surface of the outer membrane. In Xanthomonas oryzae pv. oryzae (strain KACC10331 / KXO85), this protein is LPS-assembly protein LptD.